The following is a 508-amino-acid chain: MNTELTSRADAPLVLILGLGETGVAAARWCAREGARLRVADTRMQPGGLEGLRAVLQEAQVEYHLGCGSHFDPALLDGVTQLVLSPGLAPGQEPAASLLAAAVSRGIEVLGEVELFARALASLAEARAYHPRLLAVTGTNGKTTVTALTRQLIEACGLSARAAGNISPAALASLMEALDQDALPDVWVLELSSFQLETTHSLQADAAVVLNVTQDHLDWHGDMQAYAQAKARLLKMARVAIVNRDDPLTLAMVADVNGLNVRSFGRDLPQRVGDMGLELGQGVAWLVACEPSDFDEPVVRRKKDAPPPQRGEGRMSRLMPVDALRIRGVHNALNALAALQLARVLELGWGPMLRALRDYAGEPHRAAFVRSIGGVDYINDSKGTNVGATVAALEGLGQTVVLIAGGQGKGQDFSPLRSAVSRHARAVVLIGADGPAIGQVLESTGVALVVAADMREAVRRAAEIAQAGEAVLLSPACASLDMYRNYPHRGQVFVEEVEELALDRGEVL.

138-144 (GTNGKTT) contacts ATP.

This sequence belongs to the MurCDEF family.

The protein localises to the cytoplasm. It carries out the reaction UDP-N-acetyl-alpha-D-muramoyl-L-alanine + D-glutamate + ATP = UDP-N-acetyl-alpha-D-muramoyl-L-alanyl-D-glutamate + ADP + phosphate + H(+). It participates in cell wall biogenesis; peptidoglycan biosynthesis. In terms of biological role, cell wall formation. Catalyzes the addition of glutamate to the nucleotide precursor UDP-N-acetylmuramoyl-L-alanine (UMA). The polypeptide is UDP-N-acetylmuramoylalanine--D-glutamate ligase (Bordetella avium (strain 197N)).